The following is a 384-amino-acid chain: Ceramide very long chain fatty acid hydroxylase SCS7 (384 aa).

Residues methionine 1–alanine 197 lie on the Cytoplasmic side of the membrane. A Cytochrome b5 heme-binding domain is found at leucine 9–alanine 90. Heme contacts are provided by histidine 45 and histidine 72. The helical transmembrane segment at tryptophan 198–alanine 216 threads the bilayer. At leucine 217–asparagine 221 the chain is on the lumenal side. A helical membrane pass occupies residues glutamine 222–phenylalanine 246. Zn(2+)-binding residues include histidine 244, histidine 249, histidine 268, histidine 271, and histidine 272. The Cytoplasmic portion of the chain corresponds to leucine 247–proline 284. The helical transmembrane segment at proline 285–leucine 302 threads the bilayer. Residues leucine 303–proline 304 lie on the Lumenal side of the membrane. The helical transmembrane segment at leucine 305–phenylalanine 328 threads the bilayer. The Zn(2+) site is built by histidine 326, histidine 330, histidine 345, histidine 348, and histidine 349. Residues leucine 329–glutamate 384 are Cytoplasmic-facing.

The protein belongs to the sterol desaturase family. SCS7 subfamily. Zn(2+) serves as cofactor.

It is found in the endoplasmic reticulum membrane. It carries out the reaction an N-(1,2 saturated acyl)-(4R)-hydroxysphinganine + 2 Fe(II)-[cytochrome b5] + O2 + 2 H(+) = an N-(2R-hydroxyacyl)-4R-hydroxysphinganine + 2 Fe(III)-[cytochrome b5] + H2O. The catalysed reaction is an N-(1,2-saturated acyl)sphinganine + 2 Fe(II)-[cytochrome b5] + O2 + 2 H(+) = an N-[(2'R)-hydroxyacyl]sphinganine + 2 Fe(III)-[cytochrome b5] + H2O. The enzyme catalyses N-hexacosanoyl-(4R)-hydroxysphinganine + 2 Fe(II)-[cytochrome b5] + O2 + 2 H(+) = N-(2-hydroxyhexacosanyl)-(4R)-hydroxysphinganine + 2 Fe(III)-[cytochrome b5] + H2O. The protein operates within sphingolipid metabolism. Functionally, ceramide hydroxylase involved in the hydroxylation of sphingolipid-associated very long chain fatty acids. Postulated to hydroxylate the very long chain fatty acid of dihydroceramides and phytoceramides at C-2. The polypeptide is Ceramide very long chain fatty acid hydroxylase SCS7 (Saccharomyces cerevisiae (strain ATCC 204508 / S288c) (Baker's yeast)).